A 156-amino-acid polypeptide reads, in one-letter code: Small ribosomal subunit protein eS10 (156 aa).

Residues 91 to 156 are disordered; sequence LKRQTRPEAA…FGRGRQEQEE (66 aa). A compositionally biased stretch (basic and acidic residues) spans 95-119; that stretch reads TRPEAARPRPKEGAPRAQVGEDRAG.

The protein belongs to the eukaryotic ribosomal protein eS10 family.

It localises to the cytoplasm. In Lumbricus rubellus (Humus earthworm), this protein is Small ribosomal subunit protein eS10 (RPS10).